A 426-amino-acid chain; its full sequence is MLKLNLEGIYNFLDWHNYAQTFAPQIKVIHQKLHQDQQLKEKYLGWLELPLHFDFQELEKMKQLKNSHPNLDVLVVIGIGGSYLGAKAGIEFLQTPFKKTKPEILFAGHQASGNYLTNLLHYLKDKNWAINVISKSGITLEPALAFRILKKEIEEKYGKQLAKNRIFVTTDSQKGVLLNLALKEGYQTFVIPDSVGGRFSVFTSVGILPFVFANLDVVSMMKGALQAYHDTFQEDLFQNQAYQYALARYLLHTQQNKKMELLVSYEPHLLSFSEWWKQLFAESEGKEEKGLFVGATNNSTDLHSLGQFIQEGTKMLFETVLNVTSIKDDCVVPHIPNELDNLNYVAGKTYSQINQKILQATKQAHIEGKVPNLEIVIPTLDAYHFGYLAYFFQKACAMSGSLLGINPFNQPGVEIYKQKMFALLKS.

Catalysis depends on glutamate 282, which acts as the Proton donor. Catalysis depends on residues histidine 303 and lysine 417.

The protein belongs to the GPI family.

The protein resides in the cytoplasm. The catalysed reaction is alpha-D-glucose 6-phosphate = beta-D-fructose 6-phosphate. Its pathway is carbohydrate biosynthesis; gluconeogenesis. It functions in the pathway carbohydrate degradation; glycolysis; D-glyceraldehyde 3-phosphate and glycerone phosphate from D-glucose: step 2/4. Catalyzes the reversible isomerization of glucose-6-phosphate to fructose-6-phosphate. The chain is Glucose-6-phosphate isomerase from Onion yellows phytoplasma (strain OY-M).